We begin with the raw amino-acid sequence, 620 residues long: Glutathione-regulated potassium-efflux system protein KefC (620 aa).

Transmembrane regions (helical) follow at residues 4 to 24, 26 to 46, 54 to 74, 90 to 110, 114 to 134, 149 to 169, 178 to 198, 218 to 238, 270 to 290, 294 to 314, 327 to 347, and 359 to 379; these read HTLI…PIAV, LGLG…PWGL, SILH…GLEL, GALQ…FLGL, VAEL…MQAM, FAVL…IPLL, MGAF…VVLL, VFSA…EEVG, GLLL…GTLL, LRIV…LWLI, WFAV…GAAQ, and SLTL…VILN. Residues 399–518 form the RCK N-terminal domain; it reads QPRVIIAGFG…AGVEKPERET (120 aa). The tract at residues 597-620 is disordered; that stretch reads GWQGTEEGKHTGNMADEPETKPSS.

Belongs to the monovalent cation:proton antiporter 2 (CPA2) transporter (TC 2.A.37) family. KefC subfamily. Homodimer. Interacts with the regulatory subunit KefF.

It is found in the cell inner membrane. In terms of biological role, pore-forming subunit of a potassium efflux system that confers protection against electrophiles. Catalyzes K(+)/H(+) antiport. This Escherichia fergusonii (strain ATCC 35469 / DSM 13698 / CCUG 18766 / IAM 14443 / JCM 21226 / LMG 7866 / NBRC 102419 / NCTC 12128 / CDC 0568-73) protein is Glutathione-regulated potassium-efflux system protein KefC.